We begin with the raw amino-acid sequence, 256 residues long: Ribosomal RNA small subunit methyltransferase A (256 aa).

6 residues coordinate S-adenosyl-L-methionine: His12, Leu14, Gly39, Glu60, Asp81, and Asn103.

It belongs to the class I-like SAM-binding methyltransferase superfamily. rRNA adenine N(6)-methyltransferase family. RsmA subfamily.

It is found in the cytoplasm. The enzyme catalyses adenosine(1518)/adenosine(1519) in 16S rRNA + 4 S-adenosyl-L-methionine = N(6)-dimethyladenosine(1518)/N(6)-dimethyladenosine(1519) in 16S rRNA + 4 S-adenosyl-L-homocysteine + 4 H(+). In terms of biological role, specifically dimethylates two adjacent adenosines (A1518 and A1519) in the loop of a conserved hairpin near the 3'-end of 16S rRNA in the 30S particle. May play a critical role in biogenesis of 30S subunits. The chain is Ribosomal RNA small subunit methyltransferase A from Methylibium petroleiphilum (strain ATCC BAA-1232 / LMG 22953 / PM1).